Reading from the N-terminus, the 391-residue chain is Winged helix repair factor 1 (391 aa).

2 stretches are compositionally biased toward low complexity: residues 1 to 24 and 49 to 63; these read MNIK…PSPI and LSFN…SNIN. The disordered stretch occupies residues 1–95; it reads MNIKRNQNNS…SITTTTATST (95 aa). A compositionally biased stretch (acidic residues) spans 64–74; the sequence is GEEDNDDDDRE. Residues 82 to 95 are compositionally biased toward low complexity; the sequence is NPNPSITTTTATST.

It belongs to the STK19 family.

The protein resides in the nucleus. In terms of biological role, DNA-binding protein which is required for efficient transcription-coupled nucleotide excision repair. The sequence is that of Winged helix repair factor 1 from Dictyostelium discoideum (Social amoeba).